The sequence spans 357 residues: O-methyltransferase 1, chloroplastic (357 aa).

Residues 1–53 (MPVLPWLAAAATTPVRRSPPLPATPRALLRLPASSFPPWSNCAKSGLPPRGPF) constitute a chloroplast transit peptide. A disordered region spans residues 50 to 71 (RGPFATAADTPLGGSLPEPEEE).

This sequence belongs to the methyltransferase superfamily. LCMT family. In terms of tissue distribution, expressed in roots, leaf sheaths, flag leaves and panicles.

It localises to the plastid. It is found in the chloroplast. The catalysed reaction is N-acetylserotonin + S-adenosyl-L-methionine = melatonin + S-adenosyl-L-homocysteine + H(+). It participates in aromatic compound metabolism; melatonin biosynthesis; melatonin from serotonin: step 1/2. In terms of biological role, involved in melatonin biosynthesis. Can function as acetylserotonin O-methyltransferase. Catalyzes the transfer of a methyl group onto N-acetylserotonin, producing melatonin (N-acetyl-5-methoxytryptamine). Involved in the regulation of jasmonate- and brassinosteroid-mediated plant growth and defense responses. This chain is O-methyltransferase 1, chloroplastic, found in Oryza sativa subsp. japonica (Rice).